The chain runs to 448 residues: Portal protein (448 aa).

The disordered stretch occupies residues methionine 1–lysine 25.

Belongs to the P23virus portal protein family. Homododecamer. Interacts with the capsid protein. Interacts with the terminase large subunit; this interaction allows the packaging of viral DNA.

It is found in the virion. Its function is as follows. Forms the portal vertex of the capsid. This portal plays critical roles in head assembly, genome packaging, neck/tail attachment, and genome ejection. The portal protein multimerizes as a single ring-shaped homododecamer arranged around a central channel. Forms the portal vertex of the capsid. This portal plays critical roles in head assembly, genome packaging, neck/tail attachment, and genome ejection. The sequence is that of Portal protein from Thermus thermophilus (Thermus thermophilus phage G20c).